Reading from the N-terminus, the 207-residue chain is Outer-membrane lipoprotein LolB (207 aa).

Positions 1–21 are cleaved as a signal peptide; the sequence is MTLPDFRLIRLLPLASLVLTA. Cys-22 is lipidated: N-palmitoyl cysteine. Cys-22 is lipidated: S-diacylglycerol cysteine.

The protein belongs to the LolB family. In terms of assembly, monomer.

It localises to the cell outer membrane. In terms of biological role, plays a critical role in the incorporation of lipoproteins in the outer membrane after they are released by the LolA protein. This is Outer-membrane lipoprotein LolB from Salmonella arizonae (strain ATCC BAA-731 / CDC346-86 / RSK2980).